The primary structure comprises 132 residues: Small ribosomal subunit protein uS8 (132 aa).

This sequence belongs to the universal ribosomal protein uS8 family. As to quaternary structure, part of the 30S ribosomal subunit. Contacts proteins S5 and S12.

One of the primary rRNA binding proteins, it binds directly to 16S rRNA central domain where it helps coordinate assembly of the platform of the 30S subunit. This chain is Small ribosomal subunit protein uS8, found in Azorhizobium caulinodans (strain ATCC 43989 / DSM 5975 / JCM 20966 / LMG 6465 / NBRC 14845 / NCIMB 13405 / ORS 571).